The primary structure comprises 405 residues: MSPCGLNLSLADEAATCATPRLPNTSVVLPTGDNGTSPALPIFSMTLGAVSNVLALALLAQVAGRMRRRRSAATFLLFVASLLAIDLAGHVIPGALVLRLYTAGRAPAGGACHFLGGCMVFFGLCPLLLGCGMAVERCVGVTQPLIHAARVSVARARLALAVLAAMALAVALLPLVHVGRYELQYPGTWCFISLGPRGGWRQALLAGLFAGLGLAALLAALVCNTLSGLALLRARWRRRRSRRFRKTAGPDDRRRWGSRGPRLASASSASSITSATATLRSSRGGGSARRVHAHDVEMVGQLVGIMVVSCICWSPLLVLVVLAIGGWNSNSLQRPLFLAVRLASWNQILDPWVYILLRQAMLRQLLRLLPLRVSAKGGPTELGLTKSAWEASSLRSSRHSGFSHL.

Over 1 to 39 the chain is Extracellular; that stretch reads MSPCGLNLSLADEAATCATPRLPNTSVVLPTGDNGTSPA. N-linked (GlcNAc...) asparagine glycans are attached at residues Asn-7, Asn-24, and Asn-34. The helical transmembrane segment at 40–62 threads the bilayer; it reads LPIFSMTLGAVSNVLALALLAQV. Residues 63–80 lie on the Cytoplasmic side of the membrane; sequence AGRMRRRRSAATFLLFVA. A helical membrane pass occupies residues 81-99; sequence SLLAIDLAGHVIPGALVLR. At 100–113 the chain is on the extracellular side; that stretch reads LYTAGRAPAGGACH. Cys-112 and Cys-190 are disulfide-bonded. The helical transmembrane segment at 114 to 135 threads the bilayer; it reads FLGGCMVFFGLCPLLLGCGMAV. Residues 136-157 are Cytoplasmic-facing; it reads ERCVGVTQPLIHAARVSVARAR. Residues 158 to 179 form a helical membrane-spanning segment; it reads LALAVLAAMALAVALLPLVHVG. The Extracellular segment spans residues 180 to 202; that stretch reads RYELQYPGTWCFISLGPRGGWRQ. The helical transmembrane segment at 203–228 threads the bilayer; it reads ALLAGLFAGLGLAALLAALVCNTLSG. Residues 229-301 lie on the Cytoplasmic side of the membrane; sequence LALLRARWRR…HAHDVEMVGQ (73 aa). The interval 243–287 is disordered; sequence RFRKTAGPDDRRRWGSRGPRLASASSASSITSATATLRSSRGGGS. Positions 262–282 are enriched in low complexity; that stretch reads RLASASSASSITSATATLRSS. Residues 302-323 traverse the membrane as a helical segment; the sequence is LVGIMVVSCICWSPLLVLVVLA. At 324–337 the chain is on the extracellular side; sequence IGGWNSNSLQRPLF. Residues 338–357 form a helical membrane-spanning segment; it reads LAVRLASWNQILDPWVYILL. Residues 358 to 405 lie on the Cytoplasmic side of the membrane; that stretch reads RQAMLRQLLRLLPLRVSAKGGPTELGLTKSAWEASSLRSSRHSGFSHL.

Belongs to the G-protein coupled receptor 1 family. Post-translationally, phosphorylated. In terms of tissue distribution, abundant in kidney and in a lesser amount in lung.

The protein resides in the cell membrane. Receptor for prostaglandin E2 (PGE2). The activity of this receptor is mediated by G(q) proteins which activate a phosphatidylinositol-calcium second messenger system. May play a role as an important modulator of renal function. Implicated the smooth muscle contractile response to PGE2 in various tissues. The sequence is that of Prostaglandin E2 receptor EP1 subtype (Ptger1) from Mus musculus (Mouse).